The primary structure comprises 381 residues: Creatine kinase B-type (381 aa).

Residue Ser-4 is modified to Phosphoserine. The Phosphagen kinase N-terminal domain occupies 11 to 98; sequence KLRFPAEDEF…FDPIIEDRHG (88 aa). Residue Thr-35 is modified to Phosphothreonine. Lys-45 participates in a covalent cross-link: Glycyl lysine isopeptide (Lys-Gly) (interchain with G-Cter in ubiquitin). A creatine-binding site is contributed by Val-72. Positions 96-110 are enriched in basic and acidic residues; the sequence is RHGGYKPSDEHKTDL. The disordered stretch occupies residues 96–123; that stretch reads RHGGYKPSDEHKTDLNPDNLQGGDDLDP. Glycyl lysine isopeptide (Lys-Gly) (interchain with G-Cter in ubiquitin) cross-links involve residues Lys-101 and Lys-107. Tyr-125 carries the post-translational modification Phosphotyrosine. Residues 125–367 form the Phosphagen kinase C-terminal domain; it reads YVLSSRVRTG…KLLIEMEQRL (243 aa). Residues 128–132, Arg-130, Arg-132, and His-191 contribute to the ATP site; that span reads SSRVR. Positions 130-138 are internal MTS-like signal; the sequence is RVRTGRSIR. Ser-199 carries the phosphoserine modification. Glu-232 serves as a coordination point for creatine. Residue Arg-236 coordinates ATP. Residue Tyr-269 is modified to 3'-nitrotyrosine. Residue Ser-285 participates in creatine binding. ATP is bound by residues Arg-292, Arg-320, 320 to 325, and Asp-335; that span reads RGTGGV. Residue Thr-322 is modified to Phosphothreonine. Lys-381 is covalently cross-linked (Glycyl lysine isopeptide (Lys-Gly) (interchain with G-Cter in ubiquitin)).

It belongs to the ATP:guanido phosphotransferase family. Dimer of identical or non-identical chains, which can be either B (brain type) or M (muscle type). With MM being the major form in skeletal muscle and myocardium, MB existing in myocardium, and BB existing in many tissues, especially brain. Interacts with SLC12A6 (via C-terminus); the interaction may be required for SLC12A6 potassium-chloride cotransport activity. Post-translationally, ubiquitinated by the ECS(ASB9) complex, leading to its degradation by the proteasome.

The protein resides in the cytoplasm. It is found in the cytosol. It localises to the mitochondrion. Its subcellular location is the cell membrane. It catalyses the reaction creatine + ATP = N-phosphocreatine + ADP + H(+). In terms of biological role, reversibly catalyzes the transfer of phosphate between ATP and various phosphogens (e.g. creatine phosphate). Creatine kinase isoenzymes play a central role in energy transduction in tissues with large, fluctuating energy demands, such as skeletal muscle, heart, brain and spermatozoa. Acts as a key regulator of adaptive thermogenesis as part of the futile creatine cycle: localizes to the mitochondria of thermogenic fat cells and acts by mediating phosphorylation of creatine to initiate a futile cycle of creatine phosphorylation and dephosphorylation. During the futile creatine cycle, creatine and N-phosphocreatine are in a futile cycle, which dissipates the high energy charge of N-phosphocreatine as heat without performing any mechanical or chemical work. The polypeptide is Creatine kinase B-type (CKB) (Canis lupus familiaris (Dog)).